Consider the following 257-residue polypeptide: Adenosylcobinamide-GDP ribazoletransferase (257 aa).

A run of 7 helical transmembrane segments spans residues 30–50, 52–72, 109–129, 132–152, 175–195, 198–218, and 237–257; these read IVYFPLVGFVIGILSYLIGWI, MLLFEPFIASIIITLAGVLIT, SLLAIMFVLLLKVGFVYDIIS, SLWVIIFMPMIARLGVMLLTY, LITAIIYTLLIVALITKFIFL, NIVLIKVLGSIIVVFVFIILF, and GIELSELVYLIYIYLLIFMFF.

It belongs to the CobS family. Mg(2+) serves as cofactor.

The protein localises to the cell membrane. The catalysed reaction is alpha-ribazole + adenosylcob(III)inamide-GDP = adenosylcob(III)alamin + GMP + H(+). It carries out the reaction alpha-ribazole 5'-phosphate + adenosylcob(III)inamide-GDP = adenosylcob(III)alamin 5'-phosphate + GMP + H(+). The protein operates within cofactor biosynthesis; adenosylcobalamin biosynthesis; adenosylcobalamin from cob(II)yrinate a,c-diamide: step 7/7. Its function is as follows. Joins adenosylcobinamide-GDP and alpha-ribazole to generate adenosylcobalamin (Ado-cobalamin). Also synthesizes adenosylcobalamin 5'-phosphate from adenosylcobinamide-GDP and alpha-ribazole 5'-phosphate. This chain is Adenosylcobinamide-GDP ribazoletransferase, found in Clostridioides difficile (strain 630) (Peptoclostridium difficile).